The chain runs to 535 residues: Phosphoenolpyruvate carboxykinase (ATP) (535 aa).

Substrate-binding residues include Arg-59, Tyr-201, and Lys-207. Residues Lys-207, His-226, and 243-251 contribute to the ATP site; that span reads GLSGTGKTT. The Mn(2+) site is built by Lys-207 and His-226. Asp-264 provides a ligand contact to Mn(2+). Residues Glu-292, Arg-328, 444 to 445, and Thr-450 contribute to the ATP site; that span reads RI. Arg-328 lines the substrate pocket.

The protein belongs to the phosphoenolpyruvate carboxykinase (ATP) family. Mn(2+) serves as cofactor.

It is found in the cytoplasm. It carries out the reaction oxaloacetate + ATP = phosphoenolpyruvate + ADP + CO2. It functions in the pathway carbohydrate biosynthesis; gluconeogenesis. Its function is as follows. Involved in the gluconeogenesis. Catalyzes the conversion of oxaloacetate (OAA) to phosphoenolpyruvate (PEP) through direct phosphoryl transfer between the nucleoside triphosphate and OAA. This chain is Phosphoenolpyruvate carboxykinase (ATP), found in Bacteroides fragilis (strain ATCC 25285 / DSM 2151 / CCUG 4856 / JCM 11019 / LMG 10263 / NCTC 9343 / Onslow / VPI 2553 / EN-2).